We begin with the raw amino-acid sequence, 689 residues long: Ribonuclease J (689 aa).

The tract at residues 1 to 88 (MTDNNQNNEN…RNYAQEELDS (88 aa)) is disordered. Positions 9 to 24 (ENHENSSENSKADEMR) are enriched in basic and acidic residues. Basic residues predominate over residues 56–78 (HHKKEHRPNKKPNNHHKQKHAKT). An N6-acetyllysine mark is found at Lys-132 and Lys-138. His-206, His-208, Asp-210, His-211, His-275, and Asp-297 together coordinate Zn(2+). N6-acetyllysine is present on residues Lys-321, Lys-335, and Lys-395. 498–502 (HVSGH) provides a ligand contact to substrate. Lys-509 is modified (N6-acetyllysine). His-524 contacts Zn(2+). N6-acetyllysine occurs at positions 545, 632, and 647.

This sequence belongs to the metallo-beta-lactamase superfamily. RNA-metabolizing metallo-beta-lactamase-like family. Bacterial RNase J subfamily. As to quaternary structure, homodimer. Homotetramer; dimer of homodimers. Interacts with RNA helicase RhpA, might be a member of a minimal RNA degradosome complex. The cofactor is Zn(2+). In terms of processing, acetylated on nine lysine residues. Some of the residues are acetylated by multiple different mechanisms. RimL is partially responsible for the acetylation of Lys-321, Lys-395 and Lys-647. HPB8_1270 homolog is partially responsible for the acetylation of Lys-321, Lys-395, Lys-509 and Lys-647. Acetyl-phosphate-mediated non-enzymatic acetylation pathway takes part in the acetylation of Lys-132, Lys-321, Lys-395, Lys-509 and Lys-647. Acetylation of the remaining residues Lys-138, Lys-335, Lys-545 and Lys-632 occurs by a yet undetermined mechanism. Acetylation on a number of these residues is important for growth regulation and proper cell morphology.

The protein localises to the cytoplasm. Its activity is regulated as follows. Catalytic activity is regulated by the balance between homodimers and homotetramers, with homotetramers being the active forms of this enzyme. Acetylation allosterically regulates the homooligomerization state and hence the catalytic activity. An RNase that has 5'-3' exoribonuclease and endoribonuclease activity. Degrades 5'-monophosphorylated ssRNA and dsRNA, considerably more active on ssRNA. Association with RhpA significantly increases the dsRNase activity. Degrades RNA substrate with hairpin structures at both ends with low activity, but presence of RhpA significantly increases the activity on this substrate. Stimulates ATPase activity of RNA helicase RhpA. Involved in stabilization of mRNA but apparently not rRNA. This chain is Ribonuclease J, found in Helicobacter pylori (strain ATCC 700392 / 26695) (Campylobacter pylori).